A 398-amino-acid chain; its full sequence is Apolipoprotein L1 (398 aa).

A signal peptide spans 1 to 27 (MEGAALLRVSVLCIWMSALFLGVGVRA). Residues 35 to 47 (QQNVPSGTDTGDP) are compositionally biased toward polar residues. A disordered region spans residues 35-55 (QQNVPSGTDTGDPQSKPLGDW). A glycan (N-linked (GlcNAc...) asparagine) is linked at asparagine 261. The disordered stretch occupies residues 297-317 (PHASASRPRVTEPISAESGEQ). A phosphoserine; by FAM20C mark is found at serine 311 and serine 314.

It belongs to the apolipoprotein L family. In terms of assembly, in plasma, interacts with APOA1 and mainly associated with large high density lipoprotein particles. Phosphorylated by FAM20C in the extracellular medium. In terms of tissue distribution, plasma. Found on APOA-I-containing high density lipoprotein (HDL3). Expressed in pancreas, lung, prostate, liver, placenta and spleen.

The protein localises to the secreted. Functionally, may play a role in lipid exchange and transport throughout the body. May participate in reverse cholesterol transport from peripheral cells to the liver. This chain is Apolipoprotein L1 (APOL1), found in Homo sapiens (Human).